A 318-amino-acid polypeptide reads, in one-letter code: Ankyrin repeat domain-containing protein 1 (318 aa).

Residues 37-77 (ALEKQEDLKTTSKSLIELEEEKQSKEKQLKSELLKKKLEER) adopt a coiled-coil conformation. ANK repeat units follow at residues 151-180 (YKRT…NIEF), 184-213 (LEST…AINA), 217-246 (LLST…DLNA), 250-279 (EGDT…NLNI), and 283-314 (AGKT…KNSH).

Its subcellular location is the nucleus. Its function is as follows. May act as a nuclear transcription factor that negatively regulates the expression of cardiac genes. This Xenopus laevis (African clawed frog) protein is Ankyrin repeat domain-containing protein 1 (ankrd1).